The sequence spans 191 residues: Large ribosomal subunit protein uL5 (191 aa).

This sequence belongs to the universal ribosomal protein uL5 family. As to quaternary structure, part of the 50S ribosomal subunit; part of the 5S rRNA/L5/L18/L25 subcomplex. Contacts the 5S rRNA and the P site tRNA. Forms a bridge to the 30S subunit in the 70S ribosome.

Functionally, this is one of the proteins that bind and probably mediate the attachment of the 5S RNA into the large ribosomal subunit, where it forms part of the central protuberance. In the 70S ribosome it contacts protein S13 of the 30S subunit (bridge B1b), connecting the 2 subunits; this bridge is implicated in subunit movement. Contacts the P site tRNA; the 5S rRNA and some of its associated proteins might help stabilize positioning of ribosome-bound tRNAs. The protein is Large ribosomal subunit protein uL5 of Salinibacter ruber (strain DSM 13855 / M31).